We begin with the raw amino-acid sequence, 146 residues long: Basic phospholipase A2 (146 aa).

Residues 1–21 (MNPAHLLVLAAVCVSLLGASS) form the signal peptide. A propeptide spanning residues 22–27 (VPPRPL) is cleaved from the precursor. 7 cysteine pairs are disulfide-bonded: Cys-38–Cys-97, Cys-52–Cys-145, Cys-54–Cys-70, Cys-69–Cys-127, Cys-76–Cys-120, Cys-86–Cys-113, and Cys-106–Cys-118. Residues Tyr-53, Gly-55, and Gly-57 each contribute to the Ca(2+) site. His-73 is a catalytic residue. Position 74 (Asp-74) interacts with Ca(2+). N-linked (GlcNAc...) asparagine glycosylation occurs at Asn-109. Asp-121 is a catalytic residue.

This sequence belongs to the phospholipase A2 family. Group I subfamily. D49 sub-subfamily. The cofactor is Ca(2+). Expressed by the venom gland.

The protein localises to the secreted. The enzyme catalyses a 1,2-diacyl-sn-glycero-3-phosphocholine + H2O = a 1-acyl-sn-glycero-3-phosphocholine + a fatty acid + H(+). Functionally, PLA2 catalyzes the calcium-dependent hydrolysis of the 2-acyl groups in 3-sn-phosphoglycerides. In Micrurus corallinus (Brazilian coral snake), this protein is Basic phospholipase A2.